The following is a 499-amino-acid chain: Thioredoxin reductase 1, cytoplasmic (499 aa).

FAD is bound by residues I18–G23, D42–F43, T58–C59, and G63–K67. C59 and C64 are joined by a disulfide. Residue K68 is modified to N6-succinyllysine. The residue at position 131 (Y131) is a Phosphotyrosine. FAD contacts are provided by residues Y131 to G132 and T161. Residues R166, A198 to E204, R221 to S222, R226, R226 to F228, V291 to R293, and K315 each bind NADP(+). Position 200 (Y200) interacts with FAD. Residues D334, E341 to T343, and H472 each bind FAD. Residue E341 coordinates NADP(+). Residue H472 is the Proton acceptor of the active site. Residues C497–U498 constitute a cross-link (cysteinyl-selenocysteine (Cys-Sec)). U498 is a non-standard amino acid (selenocysteine).

Belongs to the class-I pyridine nucleotide-disulfide oxidoreductase family. Homodimer. Requires FAD as cofactor. Post-translationally, ISGylated.

It localises to the cytoplasm. It carries out the reaction [thioredoxin]-dithiol + NADP(+) = [thioredoxin]-disulfide + NADPH + H(+). It catalyses the reaction H2O2 + NADPH + H(+) = NADP(+) + 2 H2O. Its function is as follows. Reduces disulfideprotein thioredoxin (Trx) to its dithiol-containing form. Homodimeric flavoprotein involved in the regulation of cellular redox reactions, growth and differentiation. Contains a selenocysteine residue at the C-terminal active site that is essential for catalysis. Also has reductase activity on hydrogen peroxide (H2O2). This chain is Thioredoxin reductase 1, cytoplasmic, found in Rattus norvegicus (Rat).